Reading from the N-terminus, the 290-residue chain is NAD kinase (290 aa).

Asp75 (proton acceptor) is an active-site residue. NAD(+) is bound by residues 75 to 76 (DG), 148 to 149 (NE), Asp178, 189 to 194 (TAYNIS), and Gln247.

Belongs to the NAD kinase family. It depends on a divalent metal cation as a cofactor.

The protein resides in the cytoplasm. It catalyses the reaction NAD(+) + ATP = ADP + NADP(+) + H(+). Its function is as follows. Involved in the regulation of the intracellular balance of NAD and NADP, and is a key enzyme in the biosynthesis of NADP. Catalyzes specifically the phosphorylation on 2'-hydroxyl of the adenosine moiety of NAD to yield NADP. This is NAD kinase from Wolinella succinogenes (strain ATCC 29543 / DSM 1740 / CCUG 13145 / JCM 31913 / LMG 7466 / NCTC 11488 / FDC 602W) (Vibrio succinogenes).